A 59-amino-acid chain; its full sequence is Probable stress-associated endoplasmic reticulum protein (59 aa).

Residues 1–30 form a disordered region; the sequence is MSQSRTLRQKSQKYQENIEKRGVASPKKKE. Topologically, residues 1–34 are cytoplasmic; sequence MSQSRTLRQKSQKYQENIEKRGVASPKKKEDGLN. The segment covering 16 to 30 has biased composition (basic and acidic residues); the sequence is ENIEKRGVASPKKKE. A helical; Anchor for type IV membrane protein membrane pass occupies residues 35-55; it reads INPYVLGFIIFVVVGSTLLQI. Residues 56–59 are Extracellular-facing; that stretch reads LKGQ.

This sequence belongs to the RAMP4 family.

Its subcellular location is the membrane. The protein localises to the endoplasmic reticulum membrane. Its function is as follows. May interact with target proteins during translocation into the lumen of the endoplasmic reticulum. May protect unfolded target proteins against degradation and facilitate correct glycosylation. This is Probable stress-associated endoplasmic reticulum protein (serp) from Dictyostelium discoideum (Social amoeba).